We begin with the raw amino-acid sequence, 357 residues long: MIPLKTIEDLISKHSILEKELSSGEVDKKLFAEKSKEYSDLNEVIDDARKYFSYEGEKKDLEKILSDSNSDNEFKEMAEVELKDLKLENETIEKKLKLFLLPKDEADKKNAIIEIRAGTGGLEASLFAADLFKMYEKVSHQKKWELELISMSQSEAGGLKEVIASIRGKNIYSTLKYESGVHRVQRVPDTETQGRVHTSAATVAVLPEAEEVDIKINDSDLRIDVFRAGGPGGQSVNTTDSAVRITHIPTGLSVSQQDQKSQHKNKAKGMLILRSRLYELERSRIEGERSEDRKSKIGTGDRSERIRTYNFPQGRVTDHRINLTLHKLEAFLEGEAFDEMVENLTLQAQEEKLSNLN.

An N5-methylglutamine modification is found at Gln-234. The segment at 284-304 (RIEGERSEDRKSKIGTGDRSE) is disordered.

It belongs to the prokaryotic/mitochondrial release factor family. In terms of processing, methylated by PrmC. Methylation increases the termination efficiency of RF1.

It localises to the cytoplasm. Peptide chain release factor 1 directs the termination of translation in response to the peptide chain termination codons UAG and UAA. This Pelagibacter ubique (strain HTCC1062) protein is Peptide chain release factor 1.